A 172-amino-acid polypeptide reads, in one-letter code: uncharacterized protein (172 aa).

Residues 21 to 75 (FKRILLELGLTLKEFSEISGIPYSTLYKVIQGKDFRVSTLIKILKTIRSFEKDEN) form the HTH cro/C1-type domain. A DNA-binding region (H-T-H motif) is located at residues 32 to 51 (LKEFSEISGIPYSTLYKVIQ).

This is an uncharacterized protein from Methanocaldococcus jannaschii (strain ATCC 43067 / DSM 2661 / JAL-1 / JCM 10045 / NBRC 100440) (Methanococcus jannaschii).